The chain runs to 286 residues: uncharacterized protein (286 aa).

The next 7 membrane-spanning stretches (helical) occupy residues 30-50 (LTFM…LTVQ), 68-88 (LSTI…VTAF), 99-119 (WFWA…GILL), 136-156 (IVYA…LSAL), 169-189 (LFHI…LSFI), 205-225 (IIPG…VYFV), and 254-274 (SALF…YFIL).

It localises to the cell membrane. This is an uncharacterized protein from Mycoplasma genitalium (strain ATCC 33530 / DSM 19775 / NCTC 10195 / G37) (Mycoplasmoides genitalium).